A 184-amino-acid polypeptide reads, in one-letter code: Probable cobalt-precorrin-6B C(15)-methyltransferase (decarboxylating) (184 aa).

S-adenosyl-L-methionine-binding positions include T12, 36 to 40 (GCGTG), D59, and A87.

Belongs to the methyltransferase superfamily. Archaeal-type CbiT family.

It catalyses the reaction Co-precorrin-6B + S-adenosyl-L-methionine = Co-precorrin-7 + S-adenosyl-L-homocysteine + CO2. Its pathway is cofactor biosynthesis; adenosylcobalamin biosynthesis; cob(II)yrinate a,c-diamide from sirohydrochlorin (anaerobic route): step 8/10. In terms of biological role, catalyzes the methylation of C-15 in cobalt-precorrin-6B followed by the decarboxylation of C-12 to form cobalt-precorrin-7. The polypeptide is Probable cobalt-precorrin-6B C(15)-methyltransferase (decarboxylating) (Methanosarcina mazei (strain ATCC BAA-159 / DSM 3647 / Goe1 / Go1 / JCM 11833 / OCM 88) (Methanosarcina frisia)).